The chain runs to 321 residues: Transaldolase (321 aa).

Lys-132 acts as the Schiff-base intermediate with substrate in catalysis.

This sequence belongs to the transaldolase family. Type 1 subfamily. In terms of assembly, homodimer.

It localises to the cytoplasm. It carries out the reaction D-sedoheptulose 7-phosphate + D-glyceraldehyde 3-phosphate = D-erythrose 4-phosphate + beta-D-fructose 6-phosphate. Its pathway is carbohydrate degradation; pentose phosphate pathway; D-glyceraldehyde 3-phosphate and beta-D-fructose 6-phosphate from D-ribose 5-phosphate and D-xylulose 5-phosphate (non-oxidative stage): step 2/3. In terms of biological role, transaldolase is important for the balance of metabolites in the pentose-phosphate pathway. This Rhizobium leguminosarum bv. trifolii (strain WSM2304) protein is Transaldolase.